Consider the following 552-residue polypeptide: Keratin, type II cytoskeletal 6A (552 aa).

A compositionally biased stretch (polar residues) spans 1–14 (MSTKTVIRSQTSHR). The disordered stretch occupies residues 1 to 21 (MSTKTVIRSQTSHRGFSAGSA). The segment at 1-151 (MSTKTVIRSQ…DPTIQRVRTE (151 aa)) is head. Residues 152–187 (EREQIKTLNNKFASFIDKVRFLEQQNKVLDTKWALL) form a coil 1A region. Positions 152–465 (EREQIKTLNN…TLLEGEECRL (314 aa)) constitute an IF rod domain. The interval 188 to 206 (QEQGTKTVRQGLETLFEQY) is linker 1. The tract at residues 207-298 (INDLRKELDN…ALYEAELSQM (92 aa)) is coil 1B. The linker 12 stretch occupies residues 299–322 (QTHISDTSVVLSMDNNRSLDLDSI). A coil 2 region spans residues 323-461 (IAEVKAQYEE…ATYRTLLEGE (139 aa)). Residues 462–552 (ECRLNGEGVG…TSSTRKSYRP (91 aa)) form a tail region. The disordered stretch occupies residues 524–552 (ISSGLSSSGGSSSTIKYTTTSSTRKSYRP). The span at 525–552 (SSGLSSSGGSSSTIKYTTTSSTRKSYRP) shows a compositional bias: low complexity.

The protein belongs to the intermediate filament family. Heterodimer of a type I and a type II keratin. KRT6 isomers associate with KRT16 and/or KRT17. Interacts with TCHP.

Epidermis-specific type I keratin involved in wound healing. Involved in the activation of follicular keratinocytes after wounding, while it does not play a major role in keratinocyte proliferation or migration. Participates in the regulation of epithelial migration by inhibiting the activity of SRC during wound repair. In Rattus norvegicus (Rat), this protein is Keratin, type II cytoskeletal 6A (Krt6a).